Consider the following 88-residue polypeptide: HssA/B-like protein 6 (88 aa).

Positions 1–22 (MSILSALTSISNPMKSSNSNVA) are disordered.

This sequence belongs to the hssA/B family.

In Dictyostelium discoideum (Social amoeba), this protein is HssA/B-like protein 6 (hssl6).